The sequence spans 475 residues: ATP synthase subunit beta 1 (475 aa).

152 to 159 lines the ATP pocket; that stretch reads GGAGVGKT.

It belongs to the ATPase alpha/beta chains family. In terms of assembly, F-type ATPases have 2 components, CF(1) - the catalytic core - and CF(0) - the membrane proton channel. CF(1) has five subunits: alpha(3), beta(3), gamma(1), delta(1), epsilon(1). CF(0) has four main subunits: a(1), b(1), b'(1) and c(9-12).

The protein localises to the cell inner membrane. The enzyme catalyses ATP + H2O + 4 H(+)(in) = ADP + phosphate + 5 H(+)(out). Its function is as follows. Produces ATP from ADP in the presence of a proton gradient across the membrane. The catalytic sites are hosted primarily by the beta subunits. This is ATP synthase subunit beta 1 from Cereibacter sphaeroides (strain ATCC 17029 / ATH 2.4.9) (Rhodobacter sphaeroides).